We begin with the raw amino-acid sequence, 316 residues long: tRNA pseudouridine synthase B (316 aa).

Residue aspartate 47 is the Nucleophile of the active site.

This sequence belongs to the pseudouridine synthase TruB family. Type 1 subfamily.

The catalysed reaction is uridine(55) in tRNA = pseudouridine(55) in tRNA. Responsible for synthesis of pseudouridine from uracil-55 in the psi GC loop of transfer RNAs. In Aliivibrio fischeri (strain MJ11) (Vibrio fischeri), this protein is tRNA pseudouridine synthase B.